The chain runs to 268 residues: MERYESLFAQLKERKEGAFVPFVTLGDPGIEQSLKIIDTLIEAGADALELGIPFSDPLADGPTIQNATLRAFAAGVTPAQCFEMLALIRQKHPTIPIGLLMYANLVFNKGIDEFYAQCEKVGVDSVLVADVPIEESAPFRQAALRHNVAPIFICPPNADDDLLRQIASYGRGYTYLLSRAGVTGAENRAALPLNHLVAKLKEYNAAPPLQGFGISTPDQVKAAIDAGAAGAISGSAIVKIIEQHINEPEKMLAALKVFVQPMKVATRS.

Catalysis depends on proton acceptor residues Glu-49 and Asp-60.

The protein belongs to the TrpA family. Tetramer of two alpha and two beta chains.

It carries out the reaction (1S,2R)-1-C-(indol-3-yl)glycerol 3-phosphate + L-serine = D-glyceraldehyde 3-phosphate + L-tryptophan + H2O. The protein operates within amino-acid biosynthesis; L-tryptophan biosynthesis; L-tryptophan from chorismate: step 5/5. Functionally, the alpha subunit is responsible for the aldol cleavage of indoleglycerol phosphate to indole and glyceraldehyde 3-phosphate. This Shigella sonnei (strain Ss046) protein is Tryptophan synthase alpha chain.